We begin with the raw amino-acid sequence, 336 residues long: Anthranilate phosphoribosyltransferase (336 aa).

5-phospho-alpha-D-ribose 1-diphosphate-binding positions include glycine 82, glycine 85 to aspartate 86, threonine 90, asparagine 92 to threonine 95, lysine 110 to serine 118, and serine 122. Glycine 82 contacts anthranilate. Mg(2+) is bound at residue serine 94. Asparagine 113 contacts anthranilate. Arginine 168 is a binding site for anthranilate. Mg(2+) contacts are provided by aspartate 227 and glutamate 228.

The protein belongs to the anthranilate phosphoribosyltransferase family. In terms of assembly, homodimer. It depends on Mg(2+) as a cofactor.

It carries out the reaction N-(5-phospho-beta-D-ribosyl)anthranilate + diphosphate = 5-phospho-alpha-D-ribose 1-diphosphate + anthranilate. Its pathway is amino-acid biosynthesis; L-tryptophan biosynthesis; L-tryptophan from chorismate: step 2/5. Functionally, catalyzes the transfer of the phosphoribosyl group of 5-phosphorylribose-1-pyrophosphate (PRPP) to anthranilate to yield N-(5'-phosphoribosyl)-anthranilate (PRA). This is Anthranilate phosphoribosyltransferase from Leptospira interrogans serogroup Icterohaemorrhagiae serovar copenhageni (strain Fiocruz L1-130).